Here is a 376-residue protein sequence, read N- to C-terminus: Carboxylic ester hydrolase LipN (376 aa).

Residues Ser216, Asp316, and His346 contribute to the active site.

This sequence belongs to the 'GDXG' lipolytic enzyme family.

The protein localises to the cytoplasm. The enzyme catalyses a carboxylic ester + H2O = an alcohol + a carboxylate + H(+). It carries out the reaction an acetyl ester + H2O = an aliphatic alcohol + acetate + H(+). It catalyses the reaction a butanoate ester + H2O = an aliphatic alcohol + butanoate + H(+). The catalysed reaction is an octanoate ester + H2O = an aliphatic alcohol + octanoate + H(+). The enzyme catalyses decanoate ester + H2O = decanoate + an aliphatic alcohol + H(+). It carries out the reaction a dodecanoate ester + H2O = an aliphatic alcohol + dodecanoate + H(+). It catalyses the reaction 1,2,3-tributanoylglycerol + H2O = dibutanoylglycerol + butanoate + H(+). The catalysed reaction is 4-acetoxyphenol + H2O = hydroquinone + acetate + H(+). Its activity is regulated as follows. Completely inhibited by tetrahydrolipstatin (THL), RHC-80267 and N-bromosuccinimide. In terms of biological role, non specific carboxylic ester hydrolase. Hydrolyzes various pNP-esters, with a preference for short carbon chain substrates. Can also hydrolyze tributyrin to di- and monobutyrin and 4-hydroxyphenylacetate to hydroquinone. The chain is Carboxylic ester hydrolase LipN from Mycobacterium tuberculosis (strain ATCC 25618 / H37Rv).